The sequence spans 571 residues: Proline--tRNA ligase (571 aa).

Belongs to the class-II aminoacyl-tRNA synthetase family. ProS type 1 subfamily. In terms of assembly, homodimer.

The protein resides in the cytoplasm. It carries out the reaction tRNA(Pro) + L-proline + ATP = L-prolyl-tRNA(Pro) + AMP + diphosphate. Catalyzes the attachment of proline to tRNA(Pro) in a two-step reaction: proline is first activated by ATP to form Pro-AMP and then transferred to the acceptor end of tRNA(Pro). As ProRS can inadvertently accommodate and process non-cognate amino acids such as alanine and cysteine, to avoid such errors it has two additional distinct editing activities against alanine. One activity is designated as 'pretransfer' editing and involves the tRNA(Pro)-independent hydrolysis of activated Ala-AMP. The other activity is designated 'posttransfer' editing and involves deacylation of mischarged Ala-tRNA(Pro). The misacylated Cys-tRNA(Pro) is not edited by ProRS. The chain is Proline--tRNA ligase from Pseudomonas putida (strain GB-1).